The sequence spans 78 residues: D-alanyl carrier protein (78 aa).

Residues 1 to 78 (MNIQETVLNI…QIIQQVEALQ (78 aa)) enclose the Carrier domain. Ser-36 is subject to O-(pantetheine 4'-phosphoryl)serine.

The protein belongs to the DltC family. Post-translationally, 4'-phosphopantetheine is transferred from CoA to a specific serine of apo-DCP.

The protein resides in the cytoplasm. Its pathway is cell wall biogenesis; lipoteichoic acid biosynthesis. Its function is as follows. Carrier protein involved in the D-alanylation of lipoteichoic acid (LTA). The loading of thioester-linked D-alanine onto DltC is catalyzed by D-alanine--D-alanyl carrier protein ligase DltA. The DltC-carried D-alanyl group is further transferred to cell membrane phosphatidylglycerol (PG) by forming an ester bond, probably catalyzed by DltD. D-alanylation of LTA plays an important role in modulating the properties of the cell wall in Gram-positive bacteria, influencing the net charge of the cell wall. This Enterococcus faecalis (strain ATCC 700802 / V583) protein is D-alanyl carrier protein.